The primary structure comprises 589 residues: Arginine--tRNA ligase (589 aa).

The 'HIGH' region motif lies at 123 to 133 (ANVAKPMHVGH).

It belongs to the class-I aminoacyl-tRNA synthetase family. As to quaternary structure, monomer.

Its subcellular location is the cytoplasm. It catalyses the reaction tRNA(Arg) + L-arginine + ATP = L-arginyl-tRNA(Arg) + AMP + diphosphate. The protein is Arginine--tRNA ligase of Hyphomonas neptunium (strain ATCC 15444).